Reading from the N-terminus, the 519-residue chain is Histidine--tRNA ligase, cytoplasmic (519 aa).

Residues 135–137, R162, Q178, D182, R331, and 335–336 contribute to the L-histidine site; these read DLT and YY.

It belongs to the class-II aminoacyl-tRNA synthetase family. In terms of assembly, homodimer.

It is found in the cytoplasm. It carries out the reaction tRNA(His) + L-histidine + ATP = L-histidyl-tRNA(His) + AMP + diphosphate + H(+). In terms of biological role, catalyzes the ATP-dependent ligation of histidine to the 3'-end of its cognate tRNA, via the formation of an aminoacyl-adenylate intermediate (His-AMP). Plays a role in axon guidance. The chain is Histidine--tRNA ligase, cytoplasmic (hars1) from Takifugu rubripes (Japanese pufferfish).